Here is a 117-residue protein sequence, read N- to C-terminus: Large ribosomal subunit protein bL20 (117 aa).

This sequence belongs to the bacterial ribosomal protein bL20 family.

Its function is as follows. Binds directly to 23S ribosomal RNA and is necessary for the in vitro assembly process of the 50S ribosomal subunit. It is not involved in the protein synthesizing functions of that subunit. The sequence is that of Large ribosomal subunit protein bL20 from Rickettsia typhi (strain ATCC VR-144 / Wilmington).